The following is a 329-amino-acid chain: Glutamine synthetase (329 aa).

Residues 4–86 (YKLEYIWLDA…VMCEVMMPDA (83 aa)) enclose the GS beta-grasp domain. In terms of domain architecture, GS catalytic spans 89-329 (PHASNTRATV…GDPYQMLLSS (241 aa)). Mg(2+)-binding residues include glutamate 109 and glutamate 111. Residue glutamate 167 participates in ATP binding. The Mg(2+) site is built by glutamate 172 and glutamate 179. Residue glutamate 278 coordinates L-glutamate.

This sequence belongs to the glutamine synthetase family. Homooctamer and homotetramer. Mg(2+) is required as a cofactor.

It is found in the cytoplasm. The enzyme catalyses L-glutamate + NH4(+) + ATP = L-glutamine + ADP + phosphate + H(+). Catalyzes the ATP-dependent biosynthesis of glutamine from glutamate and ammonia. The sequence is that of Glutamine synthetase from Rhizobium meliloti (Ensifer meliloti).